We begin with the raw amino-acid sequence, 262 residues long: Small ribosomal subunit protein uS2 (262 aa).

The protein belongs to the universal ribosomal protein uS2 family.

This is Small ribosomal subunit protein uS2 from Borreliella afzelii (strain PKo) (Borrelia afzelii).